A 222-amino-acid polypeptide reads, in one-letter code: MLWALFFLVTTIHAELCHPDAENAFKVRLSIRAALGDKAYVWDTDQEYLFRAMVAFSMRKVPNREATEISHVLLCNITQRVSFWFVVTDPSNNYTLPAAEVQSAIRKNRNRINSAFFLDDHTLEFLKIPSTLAPPMEPSVPVWIIVFGVIFCIVTVAIALLVLSGIRQRRRNNKGPPGVEDAEDKCENIITIENGIPCDPLDMKGGHINDGFLTEDERLTPL.

The N-terminal stretch at 1–14 is a signal peptide; sequence MLWALFFLVTTIHA. The Extracellular portion of the chain corresponds to 15–141; sequence ELCHPDAENA…LAPPMEPSVP (127 aa). One can recognise a Collectrin-like domain in the interval 21–222; it reads AENAFKVRLS…LTEDERLTPL (202 aa). N-linked (GlcNAc...) asparagine glycosylation is found at N76 and N93. A helical transmembrane segment spans residues 142–162; that stretch reads VWIIVFGVIFCIVTVAIALLV. Over 163–222 the chain is Cytoplasmic; that stretch reads LSGIRQRRRNNKGPPGVEDAEDKCENIITIENGIPCDPLDMKGGHINDGFLTEDERLTPL. T214 and T220 each carry phosphothreonine.

Belongs to the CLTRN family. Monomer. Homodimer. Homodimer; dimerization prevents CLTRN cleavage by BACE2. Interacts with SNAPIN. Interacts with SLC6A18; this interaction regulates the trafficking of SLC6A18 to the cell membrane and its amino acid transporter activity. Interacts with SLC6A19; this interaction regulates the trafficking of SLC6A19 to the cell membrane and its amino acid transporter activity. Interacts with SLC6A20B. In terms of processing, glycosylated. Glycosylation is required for plasma membrane localization and for its cleavage by BACE2. Post-translationally, proteolytically processed in pancreatic beta cells by BACE2 leading to the generation and extracellular release of soluble CLTRN, and a corresponding cell-associated C-terminal fragment which is later cleaved by gamma-secretase. This shedding process inactivates CLTRN. Three cleavage sites have been identified for BACE2, two clustered sites after Phe-116 and Leu-118 and a more membrane proximal site at Phe-125; the preferred BACE2 cleavage site seems to be between Phe-125 and Leu-126, Phe-116 and Leu-118 act as alternative sites. Expressed on the apical surface of the proximal tubules in the renal cortex (at protein level). Kidney; collecting ducts and proximal tubule. Pancreas; beta cells of islets. Expressed in the cerebral cortex, hippocampus, brainstem and cerebellum.

It is found in the cell membrane. Plays an important role in amino acid transport by acting as binding partner of amino acid transporters SLC6A18 and SLC6A19, regulating their trafficking on the cell surface and their activity. May also play a role in trafficking of amino acid transporters SLC3A1 and SLC7A9 to the renal cortical cell membrane. Regulator of SNARE complex function. Stimulator of beta cell replication. The chain is Collectrin from Mus musculus (Mouse).